The primary structure comprises 469 residues: Trigger factor (469 aa).

Positions 166 to 245 (GDFLTIDITA…VKSVKERELP (80 aa)) constitute a PPIase FKBP-type domain. Residues 430 to 469 (GGEEEAAEAEAAPAVDSDAVEGEAATEEAAPSDDPAAVKF) form a disordered region.

It belongs to the FKBP-type PPIase family. Tig subfamily.

The protein localises to the cytoplasm. It catalyses the reaction [protein]-peptidylproline (omega=180) = [protein]-peptidylproline (omega=0). Involved in protein export. Acts as a chaperone by maintaining the newly synthesized protein in an open conformation. Functions as a peptidyl-prolyl cis-trans isomerase. This chain is Trigger factor, found in Arthrobacter sp. (strain FB24).